Here is a 254-residue protein sequence, read N- to C-terminus: MVISAIRGGIGFLTRVPIGHDKKAWDAFRQTPVAFTVIGYPLGTIVALPFVLLSIVPVPTLIGVYLLILIGVTGITHIDGIADIGDAAVVHDTDDEHSRRRSVLHDSQVGVGGALAVTVTVVSLALGVLGATRTTPQVTFILVLTAEVGAKSAMALLVCTGDAAHDGLGAALIDESTPLSLFPVILALTPLLLAIPYLGASPTAAVVLTPLIVALVIKQWADNALGGISGDVLGAVNEVSRAAAIHAGVVVWML.

6 consecutive transmembrane segments (helical) span residues 28-48, 62-81, 109-129, 138-158, 179-199, and 200-220; these read FRQT…IVAL, IGVY…IDGI, VGVG…LGVL, VTFI…ALLV, LSLF…PYLG, and ASPT…IKQW.

The protein belongs to the CobS family. It depends on Mg(2+) as a cofactor.

It localises to the cell membrane. It catalyses the reaction alpha-ribazole + adenosylcob(III)inamide-GDP = adenosylcob(III)alamin + GMP + H(+). The catalysed reaction is alpha-ribazole 5'-phosphate + adenosylcob(III)inamide-GDP = adenosylcob(III)alamin 5'-phosphate + GMP + H(+). It participates in cofactor biosynthesis; adenosylcobalamin biosynthesis; adenosylcobalamin from cob(II)yrinate a,c-diamide: step 7/7. In terms of biological role, joins adenosylcobinamide-GDP and alpha-ribazole to generate adenosylcobalamin (Ado-cobalamin). Also synthesizes adenosylcobalamin 5'-phosphate from adenosylcobinamide-GDP and alpha-ribazole 5'-phosphate. The sequence is that of Adenosylcobinamide-GDP ribazoletransferase from Haloquadratum walsbyi (strain DSM 16790 / HBSQ001).